Consider the following 427-residue polypeptide: Transcription termination factor Rho (427 aa).

A Rho RNA-BD domain is found at 51 to 125 (LLFMEGVLEI…LHVEAVNGDD (75 aa)). ATP contacts are provided by residues 168 to 173 (GFGQRG), 180 to 185 (KAGKTM), and R211.

Belongs to the Rho family. Homohexamer. The homohexamer assembles into an open ring structure.

Its function is as follows. Facilitates transcription termination by a mechanism that involves Rho binding to the nascent RNA, activation of Rho's RNA-dependent ATPase activity, and release of the mRNA from the DNA template. The sequence is that of Transcription termination factor Rho from Bacillus subtilis (strain 168).